Consider the following 497-residue polypeptide: MERNPISPLYAAIDLGSNSFHMWIVREVAGSVQTLAKIKRKVRLAAGLNSQNELSEEAMQRGWDCLSLFAERLQDIPAERVRIIGTAALRTAVNADIFLSKAKDILGSKVDVIPGEEEARIIYQGVAHTSGGSDKRLVVDIGGASTEVIIGEGFDASALTSLKIGCVTWLERYFKDRYLTAENFDAAIDAAKNAIEPIVEQYTQLGWETCVGASGTVQALQEIMLAQGMDEIITLSKLKRMQRQAMQYERLEDLDIEGLTLERALVFPSGLSILIAVFESLNIESMTLAGGALREGMVYEMMSKMRHHDVRERTLTSVQERFQLDTSHASAVTNTAMALLSRCDEEWQLEPQAQYLLHASVCLHEIGTSIEFKKSGEHAAYLINHIDLPGFTRAQKHLIAELLRRFREQLTSLPEQHALSAQNAARILRLLRLAVILCHRRDHNQQPPFSLSVAENKLVLTLPAAWLLANPLSHVELQQEATRQTDMGWPLVLEESE.

The protein belongs to the GppA/Ppx family. GppA subfamily.

It carries out the reaction guanosine 3'-diphosphate 5'-triphosphate + H2O = guanosine 3',5'-bis(diphosphate) + phosphate + H(+). It functions in the pathway purine metabolism; ppGpp biosynthesis; ppGpp from GTP: step 2/2. Catalyzes the conversion of pppGpp to ppGpp. Guanosine pentaphosphate (pppGpp) is a cytoplasmic signaling molecule which together with ppGpp controls the 'stringent response', an adaptive process that allows bacteria to respond to amino acid starvation, resulting in the coordinated regulation of numerous cellular activities. This Photobacterium profundum (strain SS9) protein is Guanosine-5'-triphosphate,3'-diphosphate pyrophosphatase.